The chain runs to 308 residues: Tyrosine recombinase XerD (308 aa).

Positions 13–97 (PSSTEAIQRF…VFKRFFQWAL (85 aa)) constitute a Core-binding (CB) domain. A Tyr recombinase domain is found at 118-302 (RVPKTLSEAQ…ARERLRTLHA (185 aa)). Residues Arg-158, Lys-183, His-254, Arg-257, and His-280 contribute to the active site. Tyr-289 (O-(3'-phospho-DNA)-tyrosine intermediate) is an active-site residue.

Belongs to the 'phage' integrase family. XerD subfamily. Forms a cyclic heterotetrameric complex composed of two molecules of XerC and two molecules of XerD.

The protein resides in the cytoplasm. Functionally, site-specific tyrosine recombinase, which acts by catalyzing the cutting and rejoining of the recombining DNA molecules. The XerC-XerD complex is essential to convert dimers of the bacterial chromosome into monomers to permit their segregation at cell division. It also contributes to the segregational stability of plasmids. In Ralstonia nicotianae (strain ATCC BAA-1114 / GMI1000) (Ralstonia solanacearum), this protein is Tyrosine recombinase XerD.